A 360-amino-acid chain; its full sequence is Terpene synthase 5 (360 aa).

A DDxx(x)D/E motif motif is present at residues 87–92 (DDFLER). An NDxxSxxxD/E motif motif is present at residues 237 to 245 (NDCVSYAKE).

This sequence belongs to the terpene synthase family.

Terpene synthase that converts its substrate farnesyl diphosphate (FPP) into 2 yet unidentified sesquiterpenes. This is Terpene synthase 5 from Dictyostelium purpureum (Slime mold).